A 238-amino-acid chain; its full sequence is Serine protease SplE (238 aa).

The first 36 residues, 1 to 36 (MNKNIIIKSIAALTILTSVTGVGTTVVEGIQQTAKA), serve as a signal peptide directing secretion. Catalysis depends on charge relay system residues H75, D113, and S191.

This sequence belongs to the peptidase S1B family.

It localises to the secreted. The sequence is that of Serine protease SplE (splE) from Staphylococcus aureus (strain USA300).